The sequence spans 805 residues: Angiotensin-converting enzyme 2 (805 aa).

An N-terminal signal peptide occupies residues 1-17 (MSSSCWLLLSLVAVATA). The Extracellular portion of the chain corresponds to 18 to 740 (QSLIEEKAES…LKPPYEPPVT (723 aa)). The 589-residue stretch at 19 to 607 (SLIEEKAESF…QNRNSTVGWS (589 aa)) folds into the Peptidase M2 domain. N-linked (GlcNAc...) asparagine glycosylation is found at Asn-53, Asn-82, and Asn-90. A disulfide bridge links Cys-133 with Cys-141. Chloride is bound at residue Arg-169. Substrate is bound at residue Arg-273. Asn-299 carries N-linked (GlcNAc...) asparagine glycosylation. Residues Cys-344 and Cys-361 are joined by a disulfide bond. 345–346 (HP) lines the substrate pocket. His-374 is a binding site for Zn(2+). The active-site Proton acceptor is the Glu-375. His-378 and Glu-402 together coordinate Zn(2+). N-linked (GlcNAc...) asparagine glycosylation is present at Asn-432. Residues Trp-477 and Lys-481 each contribute to the chloride site. The Proton donor role is filled by His-505. Tyr-515 lines the substrate pocket. Cys-530 and Cys-542 are joined by a disulfide. Asn-546 and Asn-601 each carry an N-linked (GlcNAc...) asparagine glycan. The Collectrin-like domain occupies 614 to 805 (ADQSIKVRIS…QNSDDAQTSF (192 aa)). The segment at 652–659 (REYFSREK) is essential for cleavage by ADAM17. N-linked (GlcNAc...) asparagine glycans are attached at residues Asn-660 and Asn-690. Positions 697-716 (RSEVEEAIRMSRGRINDIFG) are essential for cleavage by TMPRSS11D and TMPRSS2. The chain crosses the membrane as a helical span at residues 741 to 761 (IWLIIFGVVMGTVVVGIVILI). At 762-805 (VTGIKGRKKKNETKREENPYDSMDIGKGESNAGFQNSDDAQTSF) the chain is on the cytoplasmic side. Residues 771-805 (KNETKREENPYDSMDIGKGESNAGFQNSDDAQTSF) are disordered. The short motif at 778–786 (ENPYDSMDI) is the LIR element. A Phosphotyrosine modification is found at Tyr-781. Residues 781–784 (YDSM) carry the Endocytic sorting signal motif. Positions 781–785 (YDSMD) match the SH2-binding motif. At Ser-783 the chain carries Phosphoserine. A Glycyl lysine isopeptide (Lys-Gly) (interchain with G-Cter in ubiquitin) cross-link involves residue Lys-788. A PTB motif is present at residues 792–795 (NAGF). Positions 793–805 (AGFQNSDDAQTSF) are enriched in polar residues. The short motif at 803 to 805 (TSF) is the PDZ-binding element.

It belongs to the peptidase M2 family. As to quaternary structure, homodimer. Interacts with the catalytically active form of TMPRSS2. Interacts with SLC6A19; this interaction is essential for expression and function of SLC6A19 in intestine. Interacts with ITGA5:ITGB1. Probably interacts (via endocytic sorting signal motif) with AP2M1; the interaction is inhibited by phosphorylation of Tyr-781. Interacts (via PDZ-binding motif) with NHERF1 (via PDZ domains); the interaction may enhance ACE2 membrane residence. The cofactor is Zn(2+). Requires chloride as cofactor. In terms of processing, glycosylated. Proteolytic cleavage by ADAM17 generates a secreted form. Also cleaved by serine proteases: TMPRSS2, TMPRSS11D and HPN/TMPRSS1. Post-translationally, phosphorylated. Phosphorylation at Tyr-781 probably inhibits interaction with AP2M1 and enables interactions with proteins containing SH2 domains. In terms of processing, ubiquitinated. Ubiquitinated on Lys-788 via 'Lys-48'-linked ubiquitin. 'Lys-48'-linked deubiquitinated by USP50 on the Lys-788; leading to its stabilization. Expressed in heart, kidney and forebrain. In testis, expression is restricted to Leydig cells. In heart, expressed in endothelial cells from small and large arteries, arterial smooth muscle cells, and myocytes (at protein level). Ubiquitously expressed, with highest levels in ileum, bladder and lung.

It is found in the secreted. It localises to the cell membrane. The protein localises to the cytoplasm. The protein resides in the cell projection. Its subcellular location is the cilium. It is found in the apical cell membrane. The enzyme catalyses angiotensin II + H2O = angiotensin-(1-7) + L-phenylalanine. It carries out the reaction angiotensin I + H2O = angiotensin-(1-9) + L-leucine. The catalysed reaction is bradykinin(1-8) + H2O = bradykinin(1-7) + L-phenylalanine. It catalyses the reaction neurotensin + H2O = neurotensin-(1-12) + L-leucine. The enzyme catalyses kinetensin + H2O = kinetensin-(1-8) + L-leucine. It carries out the reaction dynorphin A-(1-13) + H2O = dynorphin A-(1-12) + L-lysine. The catalysed reaction is apelin-13 + H2O = apelin-12 + L-phenylalanine. It catalyses the reaction [Pyr1]apelin-13 + H2O = [Pyr1]apelin-12 + L-phenylalanine. The enzyme catalyses apelin-17 + H2O = apelin-16 + L-phenylalanine. Its activity is regulated as follows. Activated by chloride and fluoride, but not bromide. Inhibited by MLN-4760, cFP_Leu, and EDTA, but not by the ACE inhibitors linosipril, captopril, enalaprilat. Its function is as follows. Essential counter-regulatory carboxypeptidase of the renin-angiotensin hormone system that is a critical regulator of blood volume, systemic vascular resistance, and thus cardiovascular homeostasis. Converts angiotensin I to angiotensin 1-9, a nine-amino acid peptide with anti-hypertrophic effects in cardiomyocytes, and angiotensin II to angiotensin 1-7, which then acts as a beneficial vasodilator and anti-proliferation agent, counterbalancing the actions of the vasoconstrictor angiotensin II. Also removes the C-terminal residue from three other vasoactive peptides, neurotensin, kinetensin, and des-Arg bradykinin, but is not active on bradykinin. Also cleaves other biological peptides, such as apelins, casomorphins and dynorphin A. Plays an important role in amino acid transport by acting as binding partner of amino acid transporter SLC6A19 in intestine, regulating trafficking, expression on the cell surface, and its catalytic activity. This is Angiotensin-converting enzyme 2 (Ace2) from Rattus norvegicus (Rat).